Here is an 85-residue protein sequence, read N- to C-terminus: Large ribosomal subunit protein bL27 (85 aa).

A disordered region spans residues 1 to 22; that stretch reads MAHKKAGGSTRNGRDSESKRLG.

Belongs to the bacterial ribosomal protein bL27 family.

The chain is Large ribosomal subunit protein bL27 from Vibrio parahaemolyticus serotype O3:K6 (strain RIMD 2210633).